The sequence spans 86 residues: Large ribosomal subunit protein bL31B (86 aa).

The protein belongs to the bacterial ribosomal protein bL31 family. Type B subfamily. In terms of assembly, part of the 50S ribosomal subunit.

The chain is Large ribosomal subunit protein bL31B from Vibrio parahaemolyticus serotype O3:K6 (strain RIMD 2210633).